The primary structure comprises 203 residues: Small ribosomal subunit protein uS5 (203 aa).

Residues 51–114 (LEDEVLDITM…ENAKLNVVRI (64 aa)) form the S5 DRBM domain.

This sequence belongs to the universal ribosomal protein uS5 family. As to quaternary structure, part of the 30S ribosomal subunit. Contacts protein S4.

With S4 and S12 plays an important role in translational accuracy. The sequence is that of Small ribosomal subunit protein uS5 from Methanothrix thermoacetophila (strain DSM 6194 / JCM 14653 / NBRC 101360 / PT) (Methanosaeta thermophila).